We begin with the raw amino-acid sequence, 164 residues long: S-ribosylhomocysteine lyase (164 aa).

3 residues coordinate Fe cation: His-54, His-58, and Cys-128.

It belongs to the LuxS family. As to quaternary structure, homodimer. It depends on Fe cation as a cofactor.

The catalysed reaction is S-(5-deoxy-D-ribos-5-yl)-L-homocysteine = (S)-4,5-dihydroxypentane-2,3-dione + L-homocysteine. Its function is as follows. Involved in the synthesis of autoinducer 2 (AI-2) which is secreted by bacteria and is used to communicate both the cell density and the metabolic potential of the environment. The regulation of gene expression in response to changes in cell density is called quorum sensing. Catalyzes the transformation of S-ribosylhomocysteine (RHC) to homocysteine (HC) and 4,5-dihydroxy-2,3-pentadione (DPD). The sequence is that of S-ribosylhomocysteine lyase from Campylobacter jejuni subsp. jejuni serotype O:23/36 (strain 81-176).